The primary structure comprises 65 residues: Small hydrophobic protein (65 aa).

Residues 1–20 lie on the Intravirion side of the membrane; that stretch reads MGNTSITIEFTSKFWPYFTL. An interaction with host BCAP31 region spans residues 6–15; that stretch reads ITIEFTSKFW. Residues 21–44 form a helical; Signal-anchor for type II membrane protein membrane-spanning segment; the sequence is IHMILTPISLLIIITIMIAILNKL. Positions 38–43 are interaction with small-molecule inhibitor; it reads IAILNK. Topologically, residues 45–65 are virion surface; that stretch reads SEHKTFCNKTLELGQMYQINT. Asparagine 52 is a glycosylation site (N-linked (GlcNAc...) asparagine; by host).

The protein belongs to the orthopneumovirus small hydrophobic protein family. As to quaternary structure, homopentamer forming a funnel-like pore. Interacts with glycoprotein G; this interaction occurs on the surface of virion particles and infected cells. Interacts with host BCAP31 (via C-terminus); this interaction is direct. Four species of SH have been detected in infected cell cytoplasm: a 7.5 kDa non-glycosylated form (SH0), a 13-15 kDa form that contains one or two N-linked carbohydrate side chains of the high-mannose type (SHg), a 21-30 kDa polylactosaminoglycan-modified form of the protein (SHp), and the isoform generated by alternative translational initiation. Of these different forms, SH0 is by far the most abundant protein detected during virus infection. Post-translationally, tyrosine phosphorylated.

Its subcellular location is the virion membrane. The protein localises to the host cell membrane. It is found in the host Golgi apparatus membrane. The protein resides in the host endoplasmic reticulum membrane. Its activity is regulated as follows. Channel activity is inhibited by copper. Also inhibited by small-molecule pyronin B. Viroporin that forms a homopentameric ion channel displaying low ion selectivity. May play a role in virus morphogenesis and pathogenicity at various stages of the viral life cycle. Accumulates at the membrane of the Golgi apparatus in infected cells and may facilitate virus release by modifying the secretory pathway. May enhance host membrane permeability and disrupt cellular ion homeostasis, which can be sensed as damage-associated molecular patterns/danger signals, triggering NLRP3 inflammasome activation and inflammatory immune response. Also inhibits host TNFA-mediated signaling pathway and may delay apoptosis, allowing time for the virus to replicate. The sequence is that of Small hydrophobic protein from Human respiratory syncytial virus B (strain 18537).